The chain runs to 145 residues: D-aminoacyl-tRNA deacylase (145 aa).

The Gly-cisPro motif, important for rejection of L-amino acids motif lies at 137-138 (GP).

This sequence belongs to the DTD family. In terms of assembly, homodimer.

The protein resides in the cytoplasm. It carries out the reaction glycyl-tRNA(Ala) + H2O = tRNA(Ala) + glycine + H(+). The catalysed reaction is a D-aminoacyl-tRNA + H2O = a tRNA + a D-alpha-amino acid + H(+). An aminoacyl-tRNA editing enzyme that deacylates mischarged D-aminoacyl-tRNAs. Also deacylates mischarged glycyl-tRNA(Ala), protecting cells against glycine mischarging by AlaRS. Acts via tRNA-based rather than protein-based catalysis; rejects L-amino acids rather than detecting D-amino acids in the active site. By recycling D-aminoacyl-tRNA to D-amino acids and free tRNA molecules, this enzyme counteracts the toxicity associated with the formation of D-aminoacyl-tRNA entities in vivo and helps enforce protein L-homochirality. This Shewanella loihica (strain ATCC BAA-1088 / PV-4) protein is D-aminoacyl-tRNA deacylase.